A 384-amino-acid polypeptide reads, in one-letter code: S-adenosylmethionine synthase (384 aa).

Residue His-15 coordinates ATP. Residue Asp-17 participates in Mg(2+) binding. Glu-43 serves as a coordination point for K(+). The L-methionine site is built by Glu-56 and Gln-99. Residues 99–109 (QSPDINQGVDR) are flexible loop. ATP is bound by residues 164 to 166 (DAK), 230 to 231 (RF), Asp-239, 245 to 246 (RK), Ala-262, and Lys-266. L-methionine is bound at residue Asp-239. Lys-270 is an L-methionine binding site.

It belongs to the AdoMet synthase family. Homotetramer; dimer of dimers. Mg(2+) is required as a cofactor. K(+) serves as cofactor.

Its subcellular location is the cytoplasm. It carries out the reaction L-methionine + ATP + H2O = S-adenosyl-L-methionine + phosphate + diphosphate. It participates in amino-acid biosynthesis; S-adenosyl-L-methionine biosynthesis; S-adenosyl-L-methionine from L-methionine: step 1/1. In terms of biological role, catalyzes the formation of S-adenosylmethionine (AdoMet) from methionine and ATP. The overall synthetic reaction is composed of two sequential steps, AdoMet formation and the subsequent tripolyphosphate hydrolysis which occurs prior to release of AdoMet from the enzyme. The sequence is that of S-adenosylmethionine synthase from Klebsiella pneumoniae subsp. pneumoniae (strain ATCC 700721 / MGH 78578).